The following is a 527-amino-acid chain: Bifunctional purine biosynthesis protein PurH (527 aa).

The MGS-like domain maps to 1-149 (MASDFLPVRR…KNFARVAVAT (149 aa)).

This sequence belongs to the PurH family.

It catalyses the reaction (6R)-10-formyltetrahydrofolate + 5-amino-1-(5-phospho-beta-D-ribosyl)imidazole-4-carboxamide = 5-formamido-1-(5-phospho-D-ribosyl)imidazole-4-carboxamide + (6S)-5,6,7,8-tetrahydrofolate. It carries out the reaction IMP + H2O = 5-formamido-1-(5-phospho-D-ribosyl)imidazole-4-carboxamide. It participates in purine metabolism; IMP biosynthesis via de novo pathway; 5-formamido-1-(5-phospho-D-ribosyl)imidazole-4-carboxamide from 5-amino-1-(5-phospho-D-ribosyl)imidazole-4-carboxamide (10-formyl THF route): step 1/1. The protein operates within purine metabolism; IMP biosynthesis via de novo pathway; IMP from 5-formamido-1-(5-phospho-D-ribosyl)imidazole-4-carboxamide: step 1/1. The protein is Bifunctional purine biosynthesis protein PurH of Xanthomonas oryzae pv. oryzae (strain MAFF 311018).